The primary structure comprises 404 residues: Glucose-1-phosphate adenylyltransferase (404 aa).

Alpha-D-glucose 1-phosphate-binding positions include Tyr99, Gly164, 179–180 (EK), and Ser197.

It belongs to the bacterial/plant glucose-1-phosphate adenylyltransferase family.

It catalyses the reaction alpha-D-glucose 1-phosphate + ATP + H(+) = ADP-alpha-D-glucose + diphosphate. It functions in the pathway capsule biogenesis; capsule polysaccharide biosynthesis. It participates in glycan biosynthesis; glycogen biosynthesis. Involved in the biosynthesis of ADP-glucose, a building block, required in the biosynthesis of maltose-1-phosphate (M1P) and in the elongation reactions to produce linear alpha-1,4-glucans. Catalyzes the reaction between ATP and alpha-D-glucose 1-phosphate (G1P) to produce pyrophosphate and ADP-Glc. In Mycobacterium bovis (strain ATCC BAA-935 / AF2122/97), this protein is Glucose-1-phosphate adenylyltransferase.